Consider the following 60-residue polypeptide: Protein BNLF2a (60 aa).

Positions 14–26 (SSACGLPGSSTET) are enriched in polar residues. Residues 14–34 (SSACGLPGSSTETRPSHPCPE) form a disordered region. Residues 41-59 (LRLLLVVLCVLFGLLCLLL) form a helical membrane-spanning segment.

The protein belongs to the lymphocryptovirus BNLF2a family. Interacts with host TAP1 and TAP2.

The protein localises to the host endoplasmic reticulum membrane. Functionally, participates in viral evasion from HLA class I-restricted T-cell immunity. Associates with host TAP1 and TAP2 and prevents TAP-mediated peptide transport and subsequent loading. The protein is Protein BNLF2a of Homo sapiens (Human).